The sequence spans 421 residues: D-inositol 3-phosphate glycosyltransferase (421 aa).

His13 contributes to the 1D-myo-inositol 3-phosphate binding site. Residues Gln19 to Pro20 and Gly27 each bind UDP-N-acetyl-alpha-D-glucosamine. Residues Asp24 to Asn29, Lys82, Tyr115, Thr139, and Arg159 each bind 1D-myo-inositol 3-phosphate. Positions 233, 238, and 294 each coordinate UDP-N-acetyl-alpha-D-glucosamine. Residues Phe303, Arg304, and Ala306 each contribute to the Mg(2+) site. UDP-N-acetyl-alpha-D-glucosamine is bound by residues Glu316 and Glu324. Residue Thr330 coordinates Mg(2+).

It belongs to the glycosyltransferase group 1 family. MshA subfamily. Homodimer.

The catalysed reaction is 1D-myo-inositol 3-phosphate + UDP-N-acetyl-alpha-D-glucosamine = 1D-myo-inositol 2-acetamido-2-deoxy-alpha-D-glucopyranoside 3-phosphate + UDP + H(+). Catalyzes the transfer of a N-acetyl-glucosamine moiety to 1D-myo-inositol 3-phosphate to produce 1D-myo-inositol 2-acetamido-2-deoxy-glucopyranoside 3-phosphate in the mycothiol biosynthesis pathway. The sequence is that of D-inositol 3-phosphate glycosyltransferase from Arthrobacter sp. (strain FB24).